We begin with the raw amino-acid sequence, 524 residues long: Nickel-binding periplasmic protein (524 aa).

A signal peptide spans 1 to 22 (MLSTLRRTLFALLACASFIVHA).

It belongs to the bacterial solute-binding protein 5 family.

It localises to the periplasm. Involved in a nickel transport system, probably represents the nickel binder. In Escherichia coli (strain K12), this protein is Nickel-binding periplasmic protein (nikA).